Consider the following 758-residue polypeptide: Aspartyl/asparaginyl beta-hydroxylase (758 aa).

Residues 1-46 (MAQRKNAKSSGNSSSSGSGSGSTSAGSSSPGARRETKHGGHKNGRK) are disordered. Over 1–53 (MAQRKNAKSSGNSSSSGSGSGSTSAGSSSPGARRETKHGGHKNGRKGGLSGTS) the chain is Cytoplasmic. The span at 9-31 (SSGNSSSSGSGSGSTSAGSSSPG) shows a compositional bias: low complexity. Phosphoserine is present on serine 14. Residues 54 to 74 (FFTWFMVIALLGVWTSVAVVW) form a helical; Signal-anchor for type II membrane protein membrane-spanning segment. A glycan (N-linked (GlcNAc...) asparagine) is linked at leucine 64. Residues 75-758 (FDLVDYEEVL…PQQRRSLPAI (684 aa)) are Lumenal-facing. Aspartate 91, aspartate 93, aspartate 95, aspartate 97, and aspartate 102 together coordinate Ca(2+). Disordered regions lie at residues 111 to 140 (ERST…EAEP) and 304 to 324 (EEQQ…EQKA). The span at 313-324 (TNRKTDDPEQKA) shows a compositional bias: basic and acidic residues. One copy of the TPR 1 repeat lies at 341–374 (IKAELDAAEKLRKRGKIEEAVNAFKELVRKYPQS). Asparagine 452 carries an N-linked (GlcNAc...) asparagine glycan. TPR repeat units lie at residues 454–487 (TSLK…TPND), 489–521 (FAKV…GDPG), and 525–557 (GRFY…GHFA). Tryptophan 625 provides a ligand contact to 2-oxoglutarate. The cysteines at positions 641 and 648 are disulfide-linked. Position 668 (serine 668) interacts with 2-oxoglutarate. Histidine 679 provides a ligand contact to Fe cation. 688 to 690 (RMH) is a binding site for 2-oxoglutarate. Asparagine 706 carries N-linked (GlcNAc...) asparagine glycosylation. Residue histidine 725 participates in Fe cation binding. Arginine 735 lines the 2-oxoglutarate pocket.

This sequence belongs to the aspartyl/asparaginyl beta-hydroxylase family. Monomer. Isoform 8 interacts with ORAI1 and STIM1. Isoform 4 interacts with CASQ2. The cofactor is Fe cation. In terms of tissue distribution, isoform 1 is detected in all tissues tested. Isoform 8 is mainly expressed in pancreas, heart, brain, kidney and liver. Isoform 8 is expressed in kidney (at protein level).

The protein localises to the endoplasmic reticulum membrane. It localises to the sarcoplasmic reticulum membrane. It carries out the reaction L-aspartyl-[protein] + 2-oxoglutarate + O2 = 3-hydroxy-L-aspartyl-[protein] + succinate + CO2. Its function is as follows. Specifically hydroxylates an Asp or Asn residue in certain epidermal growth factor-like (EGF) domains of a number of proteins. Membrane-bound Ca(2+)-sensing protein, which is a structural component of the ER-plasma membrane junctions. Isoform 8 regulates the activity of Ca(+2) released-activated Ca(+2) (CRAC) channels in T-cells. This Homo sapiens (Human) protein is Aspartyl/asparaginyl beta-hydroxylase (ASPH).